Here is a 1211-residue protein sequence, read N- to C-terminus: DNA-directed RNA polymerase subunit beta' (1211 aa).

The Zn(2+) site is built by C60, C62, C75, and C78. Mg(2+) contacts are provided by D450, D452, and D454. Zn(2+) is bound by residues C819, C893, C900, and C903.

This sequence belongs to the RNA polymerase beta' chain family. The RNAP catalytic core consists of 2 alpha, 1 beta, 1 beta' and 1 omega subunit. When a sigma factor is associated with the core the holoenzyme is formed, which can initiate transcription. Mg(2+) is required as a cofactor. Requires Zn(2+) as cofactor.

It carries out the reaction RNA(n) + a ribonucleoside 5'-triphosphate = RNA(n+1) + diphosphate. In terms of biological role, DNA-dependent RNA polymerase catalyzes the transcription of DNA into RNA using the four ribonucleoside triphosphates as substrates. The polypeptide is DNA-directed RNA polymerase subunit beta' (Streptococcus equi subsp. equi (strain 4047)).